The chain runs to 143 residues: 3-dehydroquinate dehydratase (143 aa).

Tyrosine 23 (proton acceptor) is an active-site residue. Substrate-binding residues include asparagine 74, histidine 80, and aspartate 87. Residue histidine 100 is the Proton donor of the active site. Residues 101–102 (IS) and arginine 111 contribute to the substrate site.

This sequence belongs to the type-II 3-dehydroquinase family. As to quaternary structure, homododecamer.

It carries out the reaction 3-dehydroquinate = 3-dehydroshikimate + H2O. The protein operates within metabolic intermediate biosynthesis; chorismate biosynthesis; chorismate from D-erythrose 4-phosphate and phosphoenolpyruvate: step 3/7. Catalyzes a trans-dehydration via an enolate intermediate. This is 3-dehydroquinate dehydratase from Endomicrobium trichonymphae.